An 841-amino-acid chain; its full sequence is MIDYASSASLSRMLYGEDLIDWIIKNRPGITTERQSDGPVTFPSPLYPRTRNVLIVRAPMGSGKTTALMNWLQCILCNSNMSVLIVSCRRSFTNTLSEKINRAGMSGFCTYLSSSDYIMRGREFSRLLVQIESLHRVDSKLLDNYDIVILDEIMSTIGQLFSPTMKHLCQVDNILTSLLRYRPKIVAMDATINTQLIDMLAIMRGEENIHVIVGEYAASGFSRRSCTILRSLGTNILLSVMNEFKQLPSHTQPIFKQSTGVNGSLDISLHDRTFFSELTRRLEGGLNICLFSSTISFSEIVARFCLAYTDSVLVLNSTRNTPIDINSWSNYRVVIYTTVVTVGLSFNDSHFHSMFAYIKPTINGPEMVSVYQSLGRIRSLRLNEVLIYIDASGAGSEPVFTPMLLNHVIANGGGWPTRFSQVTNMLCHNFRRDCIPTFRAADALYIFPRFKYKHLFERCTLNNVSDSINILHALLESNLIHVRFDGCDLQLNAEAFCDFLVILRADSITAQRDMKTLRKNATCPLPVEVDVIDSDAVACFVQKYLRPTVLANDLTELLTKLAEPITREQFINITMLEACRATPAALYSEAVFCRIYDYYASGNIPIIGPSGTLDTTILTCDFNTSGRWDLYRVCCKWAELLGINPLEGPNADIDPTKLLHVMKDDYDIYARSVLEIARCYLIDAQTALKRPVRATKCALSGIQNSHHSQPSTQSHAVSLFKVTWEILFGLRLTKSTTTFPGRTKVKNLRKAEIEALLDGAGIDRTSCKTHKDLYTLLMKSKSLFRNMRYDIRRPKWYDLLRSRLDKELGIYHDLVDLESVLAEIPSALWPRVEGAVDFHRL.

A Helicase ATP-binding domain is found at 45 to 210 (PLYPRTRNVL…AIMRGEENIH (166 aa)). 58 to 65 (APMGSGKT) contacts ATP.

This sequence belongs to the herpesviridae OriBP family. In terms of assembly, homodimer. Interacts with the major DNA-binding protein. Interacts with the DNA helicase/primase complex-associated protein and the polymerase accessory protein.

The protein resides in the host nucleus. Functionally, functions as a docking protein to recruit essential components of the viral replication machinery to viral DNA origins. In the presence of the major DNA-binding protein, opens dsDNA leading to a conformational change in the origin that facilitates DNA unwinding and subsequent replication. In Gallid herpesvirus 2 (strain Chicken/Md5/ATCC VR-987) (GaHV-2), this protein is Replication origin-binding protein (MDV021).